The primary structure comprises 396 residues: Chalcone synthase A (396 aa).

C170 is a catalytic residue.

The protein belongs to the thiolase-like superfamily. Chalcone/stilbene synthases family.

It catalyses the reaction (E)-4-coumaroyl-CoA + 3 malonyl-CoA + 3 H(+) = 2',4,4',6'-tetrahydroxychalcone + 3 CO2 + 4 CoA. It functions in the pathway secondary metabolite biosynthesis; flavonoid biosynthesis. In terms of biological role, the primary product of this enzyme is 4,2',4',6'-tetrahydroxychalcone (also termed naringenin-chalcone or chalcone) which can under specific conditions spontaneously isomerize into naringenin. In Ipomoea purpurea (Common morning glory), this protein is Chalcone synthase A (CHSA).